Consider the following 257-residue polypeptide: Snake venom serine protease salmonase (257 aa).

The N-terminal stretch at M1–A18 is a signal peptide. The propeptide occupies Q19–L24. The region spanning V25–A248 is the Peptidase S1 domain. Intrachain disulfides connect C31-C162, C49-C65, C141-C209, C173-C188, and C199-C224. H64 (charge relay system) is an active-site residue. The N-linked (GlcNAc...) asparagine glycan is linked to N78. D109 (charge relay system) is an active-site residue. The active-site Charge relay system is the S203.

The protein belongs to the peptidase S1 family. Snake venom subfamily. Monomer. As to expression, expressed by the venom gland.

Its subcellular location is the secreted. Its function is as follows. Snake venom serine protease that may act in the hemostasis system of the prey. This chain is Snake venom serine protease salmonase, found in Gloydius brevicauda (Korean slamosa snake).